The sequence spans 303 residues: Serine/arginine-rich splicing factor SC35 (303 aa).

At serine 7 the chain carries Phosphoserine. The region spanning 16–94 is the RRM domain; the sequence is YSLLVLNITF…REITVQFAKY (79 aa). The segment at 100-303 is disordered; sequence KISKGRVVEP…SRSQSPYAAE (204 aa). Positions 112–148 are enriched in basic residues; sequence KSRRSRSRSPRRSRSPRRSRSPPRRRSPRRSRSPRRR. Composition is skewed to basic and acidic residues over residues 149-158 and 165-178; these read SRDDYREKDY and RSYD…EKDR. Residues serine 186 and serine 188 each carry the phosphoserine modification. The span at 190–207 shows a compositional bias: basic and acidic residues; sequence SPDEKRRVRGRYDNESRS. 2 stretches are compositionally biased toward low complexity: residues 210 to 226 and 244 to 257; these read RSLS…SSSP and RSPS…PRSP. Phosphoserine is present on residues serine 251, serine 253, serine 256, serine 263, serine 278, serine 280, serine 283, serine 296, and serine 298. Residues 294 to 303 show a composition bias toward polar residues; sequence SRSQSPYAAE.

The protein belongs to the splicing factor SR family. SC subfamily. Component of the spliceosome. Interacts with SNRNP35, CYP59 and RS2Z33.

Its subcellular location is the nucleus speckle. Its function is as follows. Probably involved in intron recognition and spliceosome assembly, but not involved in alternative splicing regulation of the SCL33 intron. The protein is Serine/arginine-rich splicing factor SC35 (SC35) of Arabidopsis thaliana (Mouse-ear cress).